Consider the following 414-residue polypeptide: Dual-specificity RNA methyltransferase RlmN (414 aa).

Polar residues predominate over residues 1–13 (MTSAVGISVPNTD). Positions 1–22 (MTSAVGISVPNTDAQSSQSASQ) are disordered. Catalysis depends on Glu124, which acts as the Proton acceptor. One can recognise a Radical SAM core domain in the interval 134 to 377 (TGSRKTLCIS…CTIRQTRGDD (244 aa)). Cys141 and Cys382 are disulfide-bonded. Positions 148, 152, and 155 each coordinate [4Fe-4S] cluster. S-adenosyl-L-methionine-binding positions include 204 to 205 (GE), Ser236, 258 to 260 (SLH), and Asn339. Residue Cys382 is the S-methylcysteine intermediate of the active site.

Belongs to the radical SAM superfamily. RlmN family. It depends on [4Fe-4S] cluster as a cofactor.

Its subcellular location is the cytoplasm. The enzyme catalyses adenosine(2503) in 23S rRNA + 2 reduced [2Fe-2S]-[ferredoxin] + 2 S-adenosyl-L-methionine = 2-methyladenosine(2503) in 23S rRNA + 5'-deoxyadenosine + L-methionine + 2 oxidized [2Fe-2S]-[ferredoxin] + S-adenosyl-L-homocysteine. The catalysed reaction is adenosine(37) in tRNA + 2 reduced [2Fe-2S]-[ferredoxin] + 2 S-adenosyl-L-methionine = 2-methyladenosine(37) in tRNA + 5'-deoxyadenosine + L-methionine + 2 oxidized [2Fe-2S]-[ferredoxin] + S-adenosyl-L-homocysteine. Specifically methylates position 2 of adenine 2503 in 23S rRNA and position 2 of adenine 37 in tRNAs. m2A2503 modification seems to play a crucial role in the proofreading step occurring at the peptidyl transferase center and thus would serve to optimize ribosomal fidelity. This is Dual-specificity RNA methyltransferase RlmN from Acinetobacter baylyi (strain ATCC 33305 / BD413 / ADP1).